Reading from the N-terminus, the 520-residue chain is Polycomb protein PHO (520 aa).

4 C2H2-type zinc fingers span residues 357 to 381 (IACP…LHTH), 386 to 408 (HVCA…QLVH), 414 to 438 (FQCT…VRIH), and 444 to 468 (FVCP…ILTH). The disordered stretch occupies residues 475–497 (TSISGKSGCSNAESNSQSEDTSA).

Component of the Esc/E(z) complex, composed of Esc, E(z), Su(z)12, HDAC1/Rpd3 and Caf1-55. This complex is distinct from the PRC1 complex, which contains many other PcG proteins like Pc, Ph, Psc, Su(z)2. The two complexes however cooperate and interact together during the first 3 hours of development to establish PcG silencing. Component of the chromatin remodeling Ino80 complex. Interacts with Sfmbt to form a pho-repressive complex (PhoRC).

The protein localises to the nucleus. Functionally, polycomb group (PcG) protein that binds to the 5'-CNGCCATNNNNG-3' sequence found in the regulatory regions of many genes. PcG proteins act by forming multiprotein complexes, which are required to maintain the transcriptionally repressive state of homeotic genes throughout development. PcG proteins are not required to initiate repression, but to maintain it during later stages of development. They probably act via the methylation of histones, rendering chromatin heritably changed in its expressibility. Probably targets the Esc/E(z) complex to DNA. Necessary but not sufficient to recruit a functional PcG repressive complex that represses target genes, suggesting that the recruitment of the distinct PRC1 complex is also required to allow a subsequent repression. Its function is as follows. Proposed core component of the chromatin remodeling Ino80 complex which is involved in transcriptional regulation, DNA replication and probably DNA repair. The chain is Polycomb protein PHO (pho) from Drosophila melanogaster (Fruit fly).